Consider the following 256-residue polypeptide: Deoxyribose-phosphate aldolase (256 aa).

Asp102 serves as the catalytic Proton donor/acceptor. Lys165 (schiff-base intermediate with acetaldehyde) is an active-site residue. Lys197 (proton donor/acceptor) is an active-site residue.

Belongs to the DeoC/FbaB aldolase family. DeoC type 2 subfamily.

The protein resides in the cytoplasm. The enzyme catalyses 2-deoxy-D-ribose 5-phosphate = D-glyceraldehyde 3-phosphate + acetaldehyde. It functions in the pathway carbohydrate degradation; 2-deoxy-D-ribose 1-phosphate degradation; D-glyceraldehyde 3-phosphate and acetaldehyde from 2-deoxy-alpha-D-ribose 1-phosphate: step 2/2. Catalyzes a reversible aldol reaction between acetaldehyde and D-glyceraldehyde 3-phosphate to generate 2-deoxy-D-ribose 5-phosphate. The sequence is that of Deoxyribose-phosphate aldolase from Shewanella sp. (strain MR-7).